Here is a 261-residue protein sequence, read N- to C-terminus: Homeobox protein ceh-33 (261 aa).

The segment at residues 133–192 is a DNA-binding region (homeobox); sequence GEETSYCFRDKSRVLLRDWYCRNSYPSPREKRELAEKTHLTVTQVSNWFKNRRQRDRAGV.

The protein belongs to the SIX/Sine oculis homeobox family.

The protein localises to the nucleus. The chain is Homeobox protein ceh-33 (ceh-33) from Caenorhabditis elegans.